The chain runs to 396 residues: Elongation factor Tu (396 aa).

The region spanning 10–205 (KPHVNIGTIG…ACDESIPDPV (196 aa)) is the tr-type G domain. The interval 19–26 (GHVDHGKT) is G1. 19 to 26 (GHVDHGKT) contributes to the GTP binding site. Threonine 26 lines the Mg(2+) pocket. The interval 62–66 (GITIN) is G2. The segment at 83-86 (DAPG) is G3. GTP contacts are provided by residues 83 to 87 (DAPGH) and 138 to 141 (NKCD). A G4 region spans residues 138 to 141 (NKCD). Residues 175–177 (SAL) form a G5 region.

This sequence belongs to the TRAFAC class translation factor GTPase superfamily. Classic translation factor GTPase family. EF-Tu/EF-1A subfamily. As to quaternary structure, monomer.

It is found in the cytoplasm. It catalyses the reaction GTP + H2O = GDP + phosphate + H(+). Its function is as follows. GTP hydrolase that promotes the GTP-dependent binding of aminoacyl-tRNA to the A-site of ribosomes during protein biosynthesis. The polypeptide is Elongation factor Tu (Corynebacterium kroppenstedtii (strain DSM 44385 / JCM 11950 / CIP 105744 / CCUG 35717)).